A 453-amino-acid polypeptide reads, in one-letter code: AP-4 complex subunit mu-1 (453 aa).

Positions 184–452 (KNEVFLDVVE…LSHSDAYVIR (269 aa)) constitute an MHD domain.

The protein belongs to the adaptor complexes medium subunit family. As to quaternary structure, adaptor protein complex 4 (AP-4) is a heterotetramer composed of two large adaptins (epsilon-type subunit AP4E1 and beta-type subunit AP4B1), a medium adaptin (mu-type subunit AP4M1) and a small adaptin (sigma-type AP4S1). Interacts with tyrosine-based sorting signals on the cytoplasmic tail of cargo proteins such as APP, ATG9A, LAMP2 and NAGPA. Interacts with the C-terminal domain of GRID2. Interacts with GRIA1 and GRIA2; the interaction is indirect via CACNG3. Interacts with CACNG3; CACNG3 associates GRIA1 and GRIA2 with the adaptor protein complex 4 (AP-4) to target them to the somatodendritic compartment of neurons. Interacts with HOOK1 and HOOK2; the interactions are direct, mediate the interaction between FTS-Hook-FHIP (FHF) complex and AP-4 and the perinuclear distribution of AP-4. Ubiquitous. Highly expressed in testis and lowly expressed in brain and lung.

The protein resides in the golgi apparatus. It is found in the trans-Golgi network membrane. Its subcellular location is the early endosome. In terms of biological role, component of the adaptor protein complex 4 (AP-4). Adaptor protein complexes are vesicle coat components involved both in vesicle formation and cargo selection. They control the vesicular transport of proteins in different trafficking pathways. AP-4 forms a non clathrin-associated coat on vesicles departing the trans-Golgi network (TGN) and may be involved in the targeting of proteins from the trans-Golgi network (TGN) to the endosomal-lysosomal system. It is also involved in protein sorting to the basolateral membrane in epithelial cells and the proper asymmetric localization of somatodendritic proteins in neurons. Within AP-4, the mu-type subunit AP4M1 is directly involved in the recognition and binding of tyrosine-based sorting signals found in the cytoplasmic part of cargos. The adaptor protein complex 4 (AP-4) may also recognize other types of sorting signal. In Homo sapiens (Human), this protein is AP-4 complex subunit mu-1.